An 889-amino-acid polypeptide reads, in one-letter code: MASTSKNAQRAAASVAHSYHVCLARRMSRLPTLLSNISAPAASKALDRYESKRIHSRSFSSSLAAQRVQRPTSAGPILTNPISDHEKDNDELRSLFDAPPTSSSANHLRSSGPSTGLFEIPSLTSPQNFLVLAQQTLARAQLLVDRIDRAGSADASTAQGIKELKEVVRNLDRLSDLLCGVIDMAELVRNAHPDPEWAEAANAAYEYLCGYMNVLNTHTGLYSVLKNILSIKEVAETLSKEATAVAQVFLRDFEKSGIHLPPAERERFVQLSDEILVLGRGFLQDIAGNDASDDFARIASAQADADKSDMVGLPTHWLEDVNPTILKAVRASAITDTDGLLTFSAADQPWVFQTLLKYAPDERARKVAFRAANYGSQAQVQRLERLLKARAELATLTGASSYAEMALGDKMAKEPQNVEEFLRALTKHHRPRASHDLDKLRRLKHNATVSEPAQNTRQSTFNTNSTLPEFAPWDRDMYTEQHFRSASLSNVQPLSPYLSVGSVFAGLSRLFSALYGIRFRASMVAPGEVWSEGAGDVMKVEVLDESEGARGTSGSAEGLIGTIYADLWSREGKPGGAAHYTVRCSRRVDKDDEAGDFTYGRAEDGRVVRPQDLGGEGCGNPLQAPTFEQRERPGRYQLPVVVLMCDFARPGNANQGPCLLGWHEVETLFHEMGHAIHSMIGRTSYHNVSGTRCATDFVELPSILMEHFVSSPQVVHLLARHHSTGASLPFEHLSSHLAASKSLEGLDTYHQILLARLDQLYHSQLAASPSFSSTTTYSDLDRQMHLPGAPNLSYTEGAHPQVRFGHLFGYGSTYYSYLLDRVIASKVWNHLFANNPLDRYAGQVFKNQCLKYGGGKDPWHILADVLNEDSVRQGDSRAMQQVGKWGIEC.

The transit peptide at 1–30 directs the protein to the mitochondrion; the sequence is MASTSKNAQRAAASVAHSYHVCLARRMSRL. The tract at residues 60–112 is disordered; that stretch reads SSSLAAQRVQRPTSAGPILTNPISDHEKDNDELRSLFDAPPTSSSANHLRSSG. Residues 83–94 are compositionally biased toward basic and acidic residues; it reads SDHEKDNDELRS. Residues 100–112 are compositionally biased toward polar residues; that stretch reads PTSSSANHLRSSG. His-670 serves as a coordination point for Zn(2+). Residue Glu-671 is part of the active site. The Zn(2+) site is built by His-674 and His-677.

Belongs to the peptidase M3 family. The cofactor is Zn(2+).

It is found in the mitochondrion matrix. The catalysed reaction is Release of an N-terminal octapeptide as second stage of processing of some proteins imported into the mitochondrion.. Cleaves proteins, imported into the mitochondrion, to their mature size. While most mitochondrial precursor proteins are processed to the mature form in one step by mitochondrial processing peptidase (MPP), the sequential cleavage by MIP of an octapeptide after initial processing by MPP is a required step for a subgroup of nuclear-encoded precursor proteins destined for the matrix or the inner membrane. The protein is Mitochondrial intermediate peptidase (OCT1) of Mycosarcoma maydis (Corn smut fungus).